The following is a 234-amino-acid chain: Demethylmenaquinone methyltransferase (234 aa).

S-adenosyl-L-methionine is bound by residues Thr-62, Asp-80, 100-101, and Ser-117; that span reads DA.

The protein belongs to the class I-like SAM-binding methyltransferase superfamily. MenG/UbiE family.

The enzyme catalyses a 2-demethylmenaquinol + S-adenosyl-L-methionine = a menaquinol + S-adenosyl-L-homocysteine + H(+). Its pathway is quinol/quinone metabolism; menaquinone biosynthesis; menaquinol from 1,4-dihydroxy-2-naphthoate: step 2/2. Its function is as follows. Methyltransferase required for the conversion of demethylmenaquinol (DMKH2) to menaquinol (MKH2). The chain is Demethylmenaquinone methyltransferase from Mycobacterium bovis (strain ATCC BAA-935 / AF2122/97).